Consider the following 360-residue polypeptide: Hyaluronan and proteoglycan link protein 3 (360 aa).

The N-terminal stretch at 1-17 (MGLLLLVPLLLLPGSYG) is a signal peptide. An Ig-like V-type domain is found at 48 to 164 (KLVVETPEET…ESGLVELELR (117 aa)). Cystine bridges form between cysteine 70–cysteine 146, cysteine 188–cysteine 259, cysteine 212–cysteine 233, cysteine 286–cysteine 356, and cysteine 311–cysteine 332. 2 Link domains span residues 166 to 261 (VVFP…FCFA) and 266 to 358 (GRVY…YCYR).

This sequence belongs to the HAPLN family. Widely expressed with highest levels in spleen and placenta.

Its subcellular location is the secreted. The protein resides in the extracellular space. The protein localises to the extracellular matrix. Its function is as follows. May function in hyaluronic acid binding. The protein is Hyaluronan and proteoglycan link protein 3 (HAPLN3) of Homo sapiens (Human).